The following is a 264-amino-acid chain: Tryptophan synthase alpha chain (264 aa).

Catalysis depends on proton acceptor residues glutamate 49 and aspartate 60.

Belongs to the TrpA family. In terms of assembly, tetramer of two alpha and two beta chains.

The enzyme catalyses (1S,2R)-1-C-(indol-3-yl)glycerol 3-phosphate + L-serine = D-glyceraldehyde 3-phosphate + L-tryptophan + H2O. The protein operates within amino-acid biosynthesis; L-tryptophan biosynthesis; L-tryptophan from chorismate: step 5/5. Functionally, the alpha subunit is responsible for the aldol cleavage of indoleglycerol phosphate to indole and glyceraldehyde 3-phosphate. The protein is Tryptophan synthase alpha chain of Geobacter sulfurreducens (strain ATCC 51573 / DSM 12127 / PCA).